Reading from the N-terminus, the 55-residue chain is Ferredoxin (55 aa).

2 4Fe-4S ferredoxin-type domains span residues 2 to 27 and 28 to 55; these read YFIT…SPGD and SVYV…PQQK. [4Fe-4S] cluster contacts are provided by Cys-8, Cys-11, Cys-14, Cys-18, Cys-37, Cys-40, Cys-43, and Cys-47.

The cofactor is [4Fe-4S] cluster.

Functionally, ferredoxins are iron-sulfur proteins that transfer electrons in a wide variety of metabolic reactions. In Acetivibrio thermocellus (Hungateiclostridium thermocellum), this protein is Ferredoxin.